The following is a 161-amino-acid chain: Globin CTT-VIIB-5/CTT-VIIB-9 (161 aa).

The N-terminal stretch at 1–16 is a signal peptide; that stretch reads MKFFAVLALCIVGAIA. The Globin domain occupies 18–161; it reads PLTADEASLV…NTFAIVVPRL (144 aa). H76 and H111 together coordinate heme b.

The protein belongs to the globin family. As to quaternary structure, homodimer.

The protein is Globin CTT-VIIB-5/CTT-VIIB-9 (CTT-7B5) of Chironomus thummi thummi (Midge).